The chain runs to 114 residues: SOSS complex subunit C homolog (114 aa).

Over residues 1-10 (MAFQQHGNQE) the composition is skewed to polar residues. A disordered region spans residues 1-61 (MAFQQHGNQE…AGNTSASRIH (61 aa)).

This sequence belongs to the SOSS-C family.

This chain is SOSS complex subunit C homolog, found in Nematostella vectensis (Starlet sea anemone).